A 640-amino-acid chain; its full sequence is DNA mismatch repair protein MutL (640 aa).

Positions 343-389 are disordered; sequence TKNTATDQRAENLEVKPDSKEKELQPKESQHPRLVACDLPSGKIMPP. Residues 350-373 show a composition bias toward basic and acidic residues; sequence QRAENLEVKPDSKEKELQPKESQH.

It belongs to the DNA mismatch repair MutL/HexB family.

In terms of biological role, this protein is involved in the repair of mismatches in DNA. It is required for dam-dependent methyl-directed DNA mismatch repair. May act as a 'molecular matchmaker', a protein that promotes the formation of a stable complex between two or more DNA-binding proteins in an ATP-dependent manner without itself being part of a final effector complex. This is DNA mismatch repair protein MutL from Desulforamulus reducens (strain ATCC BAA-1160 / DSM 100696 / MI-1) (Desulfotomaculum reducens).